The following is a 553-amino-acid chain: RNA N(6)-adenosine-methyltransferase METTL16 (553 aa).

Residues 17–20 are RNA-binding; it reads PPDF. S-adenosyl-L-methionine-binding residues include R82, G110, S114, E133, T164, and N184. The interval 163–167 is K-loop; sequence KTLLM. RNA-binding regions lie at residues 199 to 211, 250 to 254, and 277 to 283; these read SRNSRRPPPSSVN, GKKCS, and QGRTMRW. The tract at residues 289–400 is VCR 1; sequence FYDDVTVPSP…QLREVPRAPE (112 aa). Phosphoserine occurs at positions 329, 425, and 429. Residues 457–496 are disordered; the sequence is EETPEATEDERDEERGGMEAMESCKGSSNGAQDGEASEKG. Residues 458 to 468 are compositionally biased toward acidic residues; it reads ETPEATEDERD. T463 bears the Phosphothreonine mark. The VCR 2 stretch occupies residues 506–553; it reads YLFKCLVNIKKEAGDAVVEMHWVEGQNRDLMNQLCTYVRNQILRLVAS.

This sequence belongs to the methyltransferase superfamily. METTL16/RlmF family. In terms of assembly, interacts with MEPCE. Interacts with LARP7.

Its subcellular location is the nucleus. The protein resides in the cytoplasm. The enzyme catalyses adenosine in U6 snRNA + S-adenosyl-L-methionine = N(6)-methyladenosine in U6 snRNA + S-adenosyl-L-homocysteine + H(+). It carries out the reaction an adenosine in mRNA + S-adenosyl-L-methionine = an N(6)-methyladenosine in mRNA + S-adenosyl-L-homocysteine + H(+). Its activity is regulated as follows. Methyltransferase activity is autoinhibited by the K-loop region that blocks S-adenosyl-L-methionine-binding. Upon activation, K-loop changes conformation, allowing S-adenosyl-L-methionine-binding and subsequent methyltransferase activity. mRNA N6-adenosine-methyltransferase activity is inhibited by zinc. RNA N6-methyltransferase that methylates adenosine residues at the N(6) position of a subset of RNAs and is involved in S-adenosyl-L-methionine homeostasis by regulating expression of MAT2A transcripts. Able to N6-methylate a subset of mRNAs and U6 small nuclear RNAs (U6 snRNAs). In contrast to the METTL3-METTL14 heterodimer, only able to methylate a limited number of RNAs: requires both a 5'UACAGAGAA-3' nonamer sequence and a specific RNA structure. Plays a key role in S-adenosyl-L-methionine homeostasis by mediating N6-methylation of MAT2A mRNAs, altering splicing of MAT2A transcripts: in presence of S-adenosyl-L-methionine, binds the 3'-UTR region of MAT2A mRNA and specifically N6-methylates the first hairpin of MAT2A mRNA, preventing recognition of their 3'-splice site by U2AF1/U2AF35, thereby inhibiting splicing and protein production of S-adenosylmethionine synthase. In S-adenosyl-L-methionine-limiting conditions, binds the 3'-UTR region of MAT2A mRNA but stalls due to the lack of a methyl donor, preventing N6-methylation and promoting expression of MAT2A. In addition to mRNAs, also able to mediate N6-methylation of U6 small nuclear RNA (U6 snRNA): specifically N6-methylates adenine in position 43 of U6 snRNAs. Also able to bind various lncRNAs, such as 7SK snRNA (7SK RNA) or 7SL RNA. Specifically binds the 3'-end of the MALAT1 long non-coding RNA. The polypeptide is RNA N(6)-adenosine-methyltransferase METTL16 (Mus musculus (Mouse)).